Consider the following 406-residue polypeptide: Elongation factor Ts, mitochondrial (406 aa).

The segment at 387–406 is disordered; that stretch reads ARPSDETSFADQVKEAAGLA.

Belongs to the EF-Ts family.

The protein resides in the mitochondrion. Associates with the EF-Tu.GDP complex and induces the exchange of GDP to GTP. It remains bound to the aminoacyl-tRNA.EF-Tu.GTP complex up to the GTP hydrolysis stage on the ribosome. The protein is Elongation factor Ts, mitochondrial of Malassezia globosa (strain ATCC MYA-4612 / CBS 7966) (Dandruff-associated fungus).